The primary structure comprises 362 residues: Phosphoserine aminotransferase (362 aa).

Positions 9 and 42 each coordinate L-glutamate. Residues 76–77 (GR), Trp-102, Thr-153, Asp-174, and Gln-197 each bind pyridoxal 5'-phosphate. Lys-198 is subject to N6-(pyridoxal phosphate)lysine. Position 239–240 (239–240 (NT)) interacts with pyridoxal 5'-phosphate.

Belongs to the class-V pyridoxal-phosphate-dependent aminotransferase family. SerC subfamily. As to quaternary structure, homodimer. Pyridoxal 5'-phosphate is required as a cofactor.

The protein resides in the cytoplasm. The catalysed reaction is O-phospho-L-serine + 2-oxoglutarate = 3-phosphooxypyruvate + L-glutamate. It catalyses the reaction 4-(phosphooxy)-L-threonine + 2-oxoglutarate = (R)-3-hydroxy-2-oxo-4-phosphooxybutanoate + L-glutamate. The protein operates within amino-acid biosynthesis; L-serine biosynthesis; L-serine from 3-phospho-D-glycerate: step 2/3. It participates in cofactor biosynthesis; pyridoxine 5'-phosphate biosynthesis; pyridoxine 5'-phosphate from D-erythrose 4-phosphate: step 3/5. Its function is as follows. Catalyzes the reversible conversion of 3-phosphohydroxypyruvate to phosphoserine and of 3-hydroxy-2-oxo-4-phosphonooxybutanoate to phosphohydroxythreonine. This Klebsiella pneumoniae subsp. pneumoniae (strain ATCC 700721 / MGH 78578) protein is Phosphoserine aminotransferase.